The chain runs to 801 residues: Quinoprotein glucose dehydrogenase A (801 aa).

A signal peptide spans M1–A33. Helical transmembrane passes span I39–L55, A59–W79, I94–T108, and V119–N138. The Proton acceptor role is filled by D471.

Belongs to the bacterial PQQ dehydrogenase family. Monomer. It depends on pyrroloquinoline quinone as a cofactor.

It is found in the cell inner membrane. It carries out the reaction D-glucose + A = D-glucono-1,5-lactone + AH2. Catalyzes an exceptionally high rate of oxidation of a wide range of aldose sugars, including D-glucose, galactose, arabinose and xylose, and also the disaccharides lactose, cellobiose and maltose. The chain is Quinoprotein glucose dehydrogenase A (gdhA) from Acinetobacter calcoaceticus.